The sequence spans 81 residues: Sulfur carrier protein TusA (81 aa).

The Cysteine persulfide intermediate role is filled by Cys-19.

The protein belongs to the sulfur carrier protein TusA family.

The protein localises to the cytoplasm. Its function is as follows. Sulfur carrier protein which probably makes part of a sulfur-relay system. The sequence is that of Sulfur carrier protein TusA from Shewanella denitrificans (strain OS217 / ATCC BAA-1090 / DSM 15013).